The following is a 318-amino-acid chain: Malate dehydrogenase (318 aa).

NAD(+) is bound by residues 11–17 (GAGGNVG) and Asp37. Residues Arg86 and Arg92 each coordinate substrate. NAD(+) contacts are provided by residues Asn99 and 122 to 124 (VTN). 2 residues coordinate substrate: Asn124 and Arg155. His179 serves as the catalytic Proton acceptor.

It belongs to the LDH/MDH superfamily. MDH type 3 family.

The catalysed reaction is (S)-malate + NAD(+) = oxaloacetate + NADH + H(+). In terms of biological role, catalyzes the reversible oxidation of malate to oxaloacetate. This is Malate dehydrogenase from Nitratiruptor sp. (strain SB155-2).